A 912-amino-acid polypeptide reads, in one-letter code: Protein translocase subunit SecA (912 aa).

ATP is bound by residues glutamine 87, 105-109 (GEGKT), and aspartate 508. A disordered region spans residues 865-912 (DEEAAQVQSGNAPVPVSQVTRDEPKVGRNDPCPCGSGKKYKHCHGQLS). Zn(2+)-binding residues include cysteine 896, cysteine 898, cysteine 907, and histidine 908. A compositionally biased stretch (basic residues) spans 902–912 (KKYKHCHGQLS).

It belongs to the SecA family. As to quaternary structure, monomer and homodimer. Part of the essential Sec protein translocation apparatus which comprises SecA, SecYEG and auxiliary proteins SecDF-YajC and YidC. The cofactor is Zn(2+).

Its subcellular location is the cell inner membrane. It is found in the cytoplasm. The catalysed reaction is ATP + H2O + cellular proteinSide 1 = ADP + phosphate + cellular proteinSide 2.. Functionally, part of the Sec protein translocase complex. Interacts with the SecYEG preprotein conducting channel. Has a central role in coupling the hydrolysis of ATP to the transfer of proteins into and across the cell membrane, serving both as a receptor for the preprotein-SecB complex and as an ATP-driven molecular motor driving the stepwise translocation of polypeptide chains across the membrane. In Xanthomonas oryzae pv. oryzae (strain MAFF 311018), this protein is Protein translocase subunit SecA.